Here is a 304-residue protein sequence, read N- to C-terminus: Ring-infected erythrocyte surface antigen (304 aa).

N-linked (GlcNAc...) asparagine glycans are attached at residues N18 and N22. The segment covering E142–H159 has biased composition (basic and acidic residues). Residues E142–I304 are disordered. Over residues D160–V298 the composition is skewed to acidic residues.

The protein localises to the cell membrane. Its function is as follows. May disrupt the normal intermolecular interactions of the cytoplasmic domain of band 3 and thereby facilitate the invagination of the red cell membrane which is necessary for the formation of the parasitophorous vacuole. This is Ring-infected erythrocyte surface antigen (RESA) from Plasmodium falciparum (isolate Palo Alto / Uganda).